The following is a 96-amino-acid chain: Large ribosomal subunit protein bL25 (96 aa).

This sequence belongs to the bacterial ribosomal protein bL25 family. In terms of assembly, part of the 50S ribosomal subunit; part of the 5S rRNA/L5/L18/L25 subcomplex. Contacts the 5S rRNA. Binds to the 5S rRNA independently of L5 and L18.

In terms of biological role, this is one of the proteins that binds to the 5S RNA in the ribosome where it forms part of the central protuberance. This chain is Large ribosomal subunit protein bL25, found in Francisella philomiragia subsp. philomiragia (strain ATCC 25017 / CCUG 19701 / FSC 153 / O#319-036).